Consider the following 217-residue polypeptide: Heart- and neural crest derivatives-expressed protein 2 (217 aa).

A disordered region spans residues 76-116; sequence DHSHYGGVPPGAGPPGLGGPRPVKRRGTANRKERRRTQSIN. Residues 83–94 show a composition bias toward gly residues; it reads VPPGAGPPGLGG. A compositionally biased stretch (basic residues) spans 97–112; that stretch reads PVKRRGTANRKERRRT. The 53-residue stretch at 99-151 folds into the bHLH domain; the sequence is KRRGTANRKERRRTQSINSAFAELRECIPNVPADTKLSKIKTLRLATSYIAYL.

In terms of assembly, efficient DNA binding requires dimerization with another bHLH protein. Forms homodimers and heterodimers with TCF3 gene products E12 and E47, HAND1 and HEY1, HEY2 and HEYL (hairy-related transcription factors).

The protein resides in the nucleus. Its function is as follows. Essential for cardiac morphogenesis, particularly for the formation of the right ventricle and of the aortic arch arteries. Required for vascular development and regulation of angiogenesis, possibly through a VEGF signaling pathway. Also plays an important role in limb development, particularly in the establishment of anterior-posterior polarization, acting as an upstream regulator of sonic hedgehog (SHH) induction in the limb bud. Is involved in the development of branchial arches, which give rise to unique structures in the head and neck. Binds DNA on E-box consensus sequence 5'-CANNTG-3'. This is Heart- and neural crest derivatives-expressed protein 2 (Hand2) from Rattus norvegicus (Rat).